A 166-amino-acid polypeptide reads, in one-letter code: Cytochrome c-550 2 (166 aa).

Residues 1-32 form the signal peptide; it reads MFSRQFGRLATLALALAVAGCAGGEQSTTAEA. Residues C71, C74, and H75 each coordinate heme c.

It belongs to the cytochrome c family. PsbV subfamily. Requires heme c as cofactor.

It is found in the cell inner membrane. Its function is as follows. Probable low-potential cytochrome c, might function in photosystem II (PSII). The polypeptide is Cytochrome c-550 2 (psbV2) (Gloeobacter violaceus (strain ATCC 29082 / PCC 7421)).